The following is a 340-amino-acid chain: Chitinase 7 (340 aa).

Residues 1–32 form the signal peptide; the sequence is MIAARAANLQVAMKALALAVLALAYAAATARA. The region spanning 33–73 is the Chitin-binding type-1 domain; the sequence is EQCGRQAGGARCPNRLCCSRWGWCGLTDDYCKGGCQSQCRV. 7 disulfides stabilise this stretch: Cys-35–Cys-50, Cys-44–Cys-56, Cys-49–Cys-63, Cys-67–Cys-71, Cys-118–Cys-173, Cys-185–Cys-193, and Cys-293–Cys-323.

This sequence belongs to the glycosyl hydrolase 19 family. Chitinase class I subfamily. As to expression, expressed in pistils, stamens and lodicules.

The catalysed reaction is Random endo-hydrolysis of N-acetyl-beta-D-glucosaminide (1-&gt;4)-beta-linkages in chitin and chitodextrins.. Functionally, hydrolyzes chitin and may play a role in defense against fungal pathogens containing chitin. The protein is Chitinase 7 (Cht7) of Oryza sativa subsp. japonica (Rice).